The chain runs to 299 residues: MEPPIPQSAPLTPNSVMVQPLLDSRMSHSRLQHPLTILPIDQVKTSHVENDYIDNPSLALTTGPKRTRGGAPELAPTPARCDQDVTHHWISFSGRPSSVSSSSSTSSDQRLLDHMAPPPVADQASPRAVRIQPKVVHCQPLDLKGPAVPPELDKHFLLCEACGKCKCKECASPRTLPSCWVCNQECLCSAQTLVNYGTCMCLVQGIFYHCTNEDDEGSCADHPCSCSRSNCCARWSFMGALSVVLPCLLCYLPATGCVKLAQRGYDRLRRPGCRCKHTNSVICKAASGDAKTSRPDKPF.

Residue M1 is modified to N-acetylmethionine. 2 disordered regions span residues 55-79 (NPSL…PTPA) and 92-126 (FSGR…QASP). Over residues 92–107 (FSGRPSSVSSSSSTSS) the composition is skewed to low complexity. S125 bears the Phosphoserine mark. An SPR domain is found at 166-273 (KCKECASPRT…GYDRLRRPGC (108 aa)). The tract at residues 181–299 (VCNQECLCSA…AKTSRPDKPF (119 aa)) is required for interaction with TESK1. Required for colocalization with TESK1 at vesicular spots in the cytoplasm and inhibition of TESK1 kinase activity, resulting in inhibition of cell spreading.

The protein belongs to the sprouty family. In terms of assembly, interacts (via C-terminus) with TESK1 (via both C- and N-termini); the interaction inhibits TESK1 kinase activity. Interacts with RAF1. Interacts with CAV1 (via C-terminus).

Its subcellular location is the cytoplasm. It is found in the cell projection. It localises to the ruffle membrane. Its function is as follows. Suppresses the insulin receptor and EGFR-transduced MAPK signaling pathway, but does not inhibit MAPK activation by a constitutively active mutant Ras. Probably impairs the formation of GTP-Ras. Inhibits Ras-independent, but not Ras-dependent, activation of RAF1. Represses integrin-mediated cell spreading via inhibition of TESK1-mediated phosphorylation of cofilin. The protein is Protein sprouty homolog 4 (SPRY4) of Homo sapiens (Human).